Here is a 2699-residue protein sequence, read N- to C-terminus: UPF0648 protein C3H5.09c (2699 aa).

Asparagine 21 is a glycosylation site (N-linked (GlcNAc...) asparagine). A helical membrane pass occupies residues 24–44 (FVWVVIATGFLFHLVLFVLSY). Residues asparagine 288, asparagine 293, asparagine 334, asparagine 345, asparagine 433, asparagine 507, asparagine 551, asparagine 655, asparagine 760, asparagine 993, asparagine 1000, asparagine 1003, asparagine 1006, and asparagine 1009 are each glycosylated (N-linked (GlcNAc...) asparagine). The tract at residues 975 to 1021 (KAKDPSPKSASESSSFYQNGSDIDDNDSNSSNTSNHTTENANAQQRK) is disordered. Residues 981 to 995 (PKSASESSSFYQNGS) are compositionally biased toward low complexity. Residues 1006 to 1033 (NTSNHTTENANAQQRKLEDLNRSFEDFL) adopt a coiled-coil conformation. The span at 1010 to 1019 (HTTENANAQQ) shows a compositional bias: polar residues. N-linked (GlcNAc...) asparagine glycans are attached at residues asparagine 1026, asparagine 1039, asparagine 1046, asparagine 1236, asparagine 1255, asparagine 1344, asparagine 1527, asparagine 1595, asparagine 1791, asparagine 1916, asparagine 2032, asparagine 2048, asparagine 2256, asparagine 2285, asparagine 2388, asparagine 2407, asparagine 2417, asparagine 2508, and asparagine 2622. The stretch at 1758-1818 (QYELLQKRRK…TLSDHYRLLE (61 aa)) forms a coiled coil. Residues 2393–2447 (FPHIYSRNHDKRKENGSQGEADNSNYSGSLMRRRTNDQEEDALATPSSSRRDSRS) form a disordered region. Positions 2408–2420 (GSQGEADNSNYSG) are enriched in polar residues. Disordered regions lie at residues 2606 to 2632 (AEEN…LNSP) and 2647 to 2676 (ADIV…ARVD). Residues 2617–2632 (SAISRNHSTRSSLNSP) are compositionally biased toward polar residues.

This sequence belongs to the UPF0648 family.

It localises to the membrane. In Schizosaccharomyces pombe (strain 972 / ATCC 24843) (Fission yeast), this protein is UPF0648 protein C3H5.09c.